The chain runs to 480 residues: MFRSFASPLALVATSALATNPATTAQHQGSFWIQTFGCQMNKADSERMAGILEAMGYHEAPAELEADLVLYNTCTIRDNAEQKVYSYLGRQARRKRTHPHLKLVVAGCVAQQEGEALLRRIPELDLVMGPQHANRLEALLTQVDNGQQVVATDDNHILEDLTTARRDSTICAWVNVIYGCNERCTYCVVPSVRGKEQSRSPEAIRLEIEGLAARGFREITLLGQNIDAYGRDLPGITPEGRRQNTLTDLLHHIHDVEGIERIRFATSHPRYFTERLIEACFDLPKVCEHFHIPFQSGDNDVLKAMARGYTVERYRRIVNRIRELMPDAAISTDVIVAFPGETDAQFQNTLNLVEEVGFDQVNTAAYSPRPNTPAATWSNQLPEVVKVERLKQLNALVERVALQRNSRYSGKVEQVLAEGINPKKPQQLMGRTRTNRLTFFAAEGPQSCRYSPGDLVDVQINSVRAFSLSGTPCDQTRSRH.

Residues 29 to 145 (GSFWIQTFGC…LEALLTQVDN (117 aa)) enclose the MTTase N-terminal domain. The [4Fe-4S] cluster site is built by Cys-38, Cys-74, Cys-108, Cys-180, Cys-184, and Cys-187. Residues 166-403 (RDSTICAWVN…NALVERVALQ (238 aa)) enclose the Radical SAM core domain. In terms of domain architecture, TRAM spans 406–474 (SRYSGKVEQV…AFSLSGTPCD (69 aa)).

This sequence belongs to the methylthiotransferase family. MiaB subfamily. In terms of assembly, monomer. [4Fe-4S] cluster is required as a cofactor.

It is found in the cytoplasm. The catalysed reaction is N(6)-dimethylallyladenosine(37) in tRNA + (sulfur carrier)-SH + AH2 + 2 S-adenosyl-L-methionine = 2-methylsulfanyl-N(6)-dimethylallyladenosine(37) in tRNA + (sulfur carrier)-H + 5'-deoxyadenosine + L-methionine + A + S-adenosyl-L-homocysteine + 2 H(+). Catalyzes the methylthiolation of N6-(dimethylallyl)adenosine (i(6)A), leading to the formation of 2-methylthio-N6-(dimethylallyl)adenosine (ms(2)i(6)A) at position 37 in tRNAs that read codons beginning with uridine. This is tRNA-2-methylthio-N(6)-dimethylallyladenosine synthase from Prochlorococcus marinus (strain MIT 9303).